The primary structure comprises 236 residues: Lipoarabinomannan carrier protein LprG (236 aa).

A signal peptide spans 1–26 (MRTPRRHCRRIAVLAAVSIAATVVAG). A lipid anchor (N-palmitoyl cysteine) is attached at C27. C27 carries S-diacylglycerol cysteine lipidation.

It belongs to the LppX/LprAFG lipoprotein family. In terms of processing, modified by Lgt on Cys-27 with an S-linked diacylglyceral, signal peptide is removed by LspA, Cys-27 is further modifed with a fatty acid on its amino group by Lnt yielding a triacylated protein.

The protein localises to the cell inner membrane. Its subcellular location is the secreted. It is found in the cell wall. Its function is as follows. Helps membrane protein Mb1445c (P55) transport triacylglycerides (TAG) across the inner cell membrane into the periplasm and probably ultimately to the outer membrane. Binds TAG in its hydrophobic cavity and transfers it between lipid bilayers. TAG probably regulates lipid metabolism and growth regulation and plays a structural role in the outer membrane. Binds di- and triacylated phosphatidyl-myo-inositol mannosides (PIMs), and glycolipid lipoglycan modulins lipoarabinomannan (LAM) and lipomannan (LM), facilitating their recognition by TLR2. Required for activity of drug efflux transporter Mb1445c. Required, probably with Mb1445c, for normal surface localization of LAM. Constitutes a host TLR2 agonist (toll-like receptor). This is Lipoarabinomannan carrier protein LprG from Mycobacterium bovis (strain ATCC BAA-935 / AF2122/97).